Here is a 498-residue protein sequence, read N- to C-terminus: MSGDAFNMSVAYQPSGMAVPEWLNKGDNAWQMISATLVGMQSVPGLVILYGSIVKKKWAVNSAFMALYAFAAVWLCWVTWGYNMSFGHKLLPFWGKARPALGQSFLLAQAVLPQTTQFYKGGGGADAVVETPWVNPLYPMATMVYFQCVFAAITLILLAGSLLGRMNIKAWMLFVPLWLTFSYTVGAFSLWGGGFLFHWGVMDYSGGYVIHLSSGVAGFTAAYWVGPRSTKDRERFPPNNVLLMLTGAGILWMGWAGFNGGDPYSANIDSSLAVLNTNICAATSLLVWTCLDVIFFKKPSVIGAVQGMITGLVCITPGAGLVQGWAAIVMGILSGSIPWFTMMVVHKRSRLLQQVDDTLGVFHTHAVAGFLGGATTGLFAEPVLCSLFLPVTNSRGAFYPGRGGGLQFVRQVAGALFIICWNVVVTSLVCLAVRAVVPLRMPEEELAIGDDAVHGEEAYALWGDGEKYDSTKHGWYSDNNDTHHNNNKAAPSGVTQNV.

The next 11 helical transmembrane spans lie at 33–53 (ISAT…YGSI), 58–78 (WAVN…LCWV), 143–163 (MVYF…GSLL), 171–191 (WMLF…FSLW), 206–226 (GGYV…YWVG), 241–261 (VLLM…FNGG), 276–296 (NTNI…VIFF), 301–321 (VIGA…GAGL), 325–345 (WAAI…MMVV), 369–389 (GFLG…SLFL), and 412–432 (VAGA…VCLA). Residues 478–498 (DNNDTHHNNNKAAPSGVTQNV) form a disordered region. Positions 487–498 (NKAAPSGVTQNV) are enriched in polar residues.

The protein belongs to the ammonia transporter channel (TC 1.A.11.2) family. As to expression, expressed in root.

It is found in the membrane. Functionally, involved in ammonium transport. The sequence is that of Ammonium transporter 3 member 1 (AMT3-1) from Oryza sativa subsp. japonica (Rice).